Consider the following 219-residue polypeptide: 2,5-diamino-6-ribosylamino-4(3H)-pyrimidinone 5'-phosphate reductase (219 aa).

NADP(+)-binding positions include Thr-52, Asp-56, 87–90 (SRCR), Val-134, and 156–159 (GGTL).

The protein belongs to the HTP reductase family. In terms of assembly, homodimer.

It catalyses the reaction 2,5-diamino-6-(1-D-ribitylamino)pyrimidin-4(3H)-one 5'-phosphate + NADP(+) = 2,5-diamino-6-(1-D-ribosylamino)pyrimidin-4(3H)-one 5'-phosphate + NADPH + H(+). The catalysed reaction is 2,5-diamino-6-(1-D-ribitylamino)pyrimidin-4(3H)-one 5'-phosphate + NAD(+) = 2,5-diamino-6-(1-D-ribosylamino)pyrimidin-4(3H)-one 5'-phosphate + NADH + H(+). It participates in cofactor biosynthesis; riboflavin biosynthesis. In terms of biological role, catalyzes an early step in riboflavin biosynthesis, the NADPH-dependent reduction of the ribose side chain of 2,5-diamino-6-ribosylamino-4(3H)-pyrimidinone 5'-phosphate, yielding 2,5-diamino-6-ribitylamino-4(3H)-pyrimidinone 5'-phosphate. The protein is 2,5-diamino-6-ribosylamino-4(3H)-pyrimidinone 5'-phosphate reductase of Archaeoglobus fulgidus (strain ATCC 49558 / DSM 4304 / JCM 9628 / NBRC 100126 / VC-16).